A 204-amino-acid chain; its full sequence is Large ribosomal subunit protein uL4 (204 aa).

Residues 49–75 (TKGRSDVSGGGKKPWRQKGRGGARAGS) form a disordered region.

Belongs to the universal ribosomal protein uL4 family. In terms of assembly, part of the 50S ribosomal subunit.

Its function is as follows. One of the primary rRNA binding proteins, this protein initially binds near the 5'-end of the 23S rRNA. It is important during the early stages of 50S assembly. It makes multiple contacts with different domains of the 23S rRNA in the assembled 50S subunit and ribosome. Forms part of the polypeptide exit tunnel. In Campylobacter jejuni (strain RM1221), this protein is Large ribosomal subunit protein uL4.